Here is a 341-residue protein sequence, read N- to C-terminus: Nicotinate-nucleotide--dimethylbenzimidazole phosphoribosyltransferase (341 aa).

Glu310 (proton acceptor) is an active-site residue.

Belongs to the CobT family.

The enzyme catalyses 5,6-dimethylbenzimidazole + nicotinate beta-D-ribonucleotide = alpha-ribazole 5'-phosphate + nicotinate + H(+). It functions in the pathway nucleoside biosynthesis; alpha-ribazole biosynthesis; alpha-ribazole from 5,6-dimethylbenzimidazole: step 1/2. Functionally, catalyzes the synthesis of alpha-ribazole-5'-phosphate from nicotinate mononucleotide (NAMN) and 5,6-dimethylbenzimidazole (DMB). The polypeptide is Nicotinate-nucleotide--dimethylbenzimidazole phosphoribosyltransferase (Vibrio cholerae serotype O1 (strain ATCC 39315 / El Tor Inaba N16961)).